The following is a 159-amino-acid chain: Phospholipase A2 AP-PLA2-I (159 aa).

The signal sequence occupies residues 1–19; that stretch reads MNFLVVIVTTVSLAGAASA. Residues 20-23 constitute a propeptide that is removed on maturation; sequence GEIQ. Disulfide bonds link cysteine 51/cysteine 159, cysteine 53/cysteine 69, cysteine 68/cysteine 139, cysteine 75/cysteine 132, cysteine 85/cysteine 125, and cysteine 110/cysteine 130. Residues tyrosine 52, glycine 54, and glycine 56 each coordinate Ca(2+). Histidine 72 is an active-site residue. Aspartate 73 is a Ca(2+) binding site. Residue aspartate 133 is part of the active site.

The protein belongs to the phospholipase A2 family. Group I subfamily. As to quaternary structure, homodimer. The cofactor is Ca(2+). As to expression, expressed by the venom gland.

Its subcellular location is the secreted. The catalysed reaction is a 1,2-diacyl-sn-glycero-3-phosphocholine + H2O = a 1-acyl-sn-glycero-3-phosphocholine + a fatty acid + H(+). Its function is as follows. Starfish phospholipase A2 (PLA2) that has hemorrhagic and capillary permeability-increasing activities and hence is considered to be deeply involved in the local inflammation. Shows hemolytic activity only in the presence of phosphatidylcholine (PC). PLA2 catalyzes the calcium-dependent hydrolysis of the 2-acyl groups in 3-sn-phosphoglycerides. This Acanthaster planci (Crown-of-thorns starfish) protein is Phospholipase A2 AP-PLA2-I.